A 932-amino-acid chain; its full sequence is Serine/threonine-protein kinase PknD (932 aa).

A Protein kinase domain is found at 4-291 (YDIVRIIGKG…ELKEDIESHL (288 aa)). Residues 10-18 (IGKGGMGEV) and lysine 33 each bind ATP. The Proton acceptor role is filled by aspartate 138.

Belongs to the protein kinase superfamily. Ser/Thr protein kinase family. In terms of processing, autophosphorylated on serine and threonine residues.

It catalyses the reaction L-seryl-[protein] + ATP = O-phospho-L-seryl-[protein] + ADP + H(+). The enzyme catalyses L-threonyl-[protein] + ATP = O-phospho-L-threonyl-[protein] + ADP + H(+). Functionally, together with the serine/threonine kinase Pkn1, may play a role in the specific interactions with host proteins during intracellular growth. In Chlamydia pneumoniae (Chlamydophila pneumoniae), this protein is Serine/threonine-protein kinase PknD.